Consider the following 173-residue polypeptide: MAEKRNIFLVGPMGAGKSTIGRQLAQQLNMEFYDSDQEIEKRTGADVGWVFDLEGEDGFRDREEKVINELTEKQGIVLATGGGSVKSRETRNRLSARGVVVYLETTIEKQLARTQRDKKRPLLQVEAPPREVLEALANERNPLYEEIADVTIRTDDQSAKVVANQIIHMLESN.

14–19 contributes to the ATP binding site; that stretch reads GAGKST. Ser-18 serves as a coordination point for Mg(2+). Residues Asp-36, Arg-60, and Gly-82 each coordinate substrate. Position 120 (Arg-120) interacts with ATP. Arg-140 contributes to the substrate binding site. An ATP-binding site is contributed by Gln-157.

It belongs to the shikimate kinase family. In terms of assembly, monomer. Mg(2+) serves as cofactor.

It is found in the cytoplasm. The enzyme catalyses shikimate + ATP = 3-phosphoshikimate + ADP + H(+). Its pathway is metabolic intermediate biosynthesis; chorismate biosynthesis; chorismate from D-erythrose 4-phosphate and phosphoenolpyruvate: step 5/7. Functionally, catalyzes the specific phosphorylation of the 3-hydroxyl group of shikimic acid using ATP as a cosubstrate. The polypeptide is Shikimate kinase 1 (Escherichia fergusonii (strain ATCC 35469 / DSM 13698 / CCUG 18766 / IAM 14443 / JCM 21226 / LMG 7866 / NBRC 102419 / NCTC 12128 / CDC 0568-73)).